The chain runs to 314 residues: tRNA dimethylallyltransferase 2 (314 aa).

Residue 8 to 15 participates in ATP binding; the sequence is GPTGTGKS. 10–15 lines the substrate pocket; that stretch reads TGTGKS.

It belongs to the IPP transferase family. As to quaternary structure, monomer. The cofactor is Mg(2+).

The enzyme catalyses adenosine(37) in tRNA + dimethylallyl diphosphate = N(6)-dimethylallyladenosine(37) in tRNA + diphosphate. Its function is as follows. Catalyzes the transfer of a dimethylallyl group onto the adenine at position 37 in tRNAs that read codons beginning with uridine, leading to the formation of N6-(dimethylallyl)adenosine (i(6)A). The sequence is that of tRNA dimethylallyltransferase 2 from Mycobacterium ulcerans (strain Agy99).